Consider the following 70-residue polypeptide: NAD(P)H-quinone oxidoreductase subunit L (70 aa).

The next 2 helical transmembrane spans lie at 2–22 (IVPLLYLALAGAYLLVVPVAL) and 39–59 (TFMYFLVFLFFPGLLVLSPFV).

The protein belongs to the complex I NdhL subunit family. As to quaternary structure, NDH-1 can be composed of about 15 different subunits; different subcomplexes with different compositions have been identified which probably have different functions.

Its subcellular location is the cellular thylakoid membrane. The enzyme catalyses a plastoquinone + NADH + (n+1) H(+)(in) = a plastoquinol + NAD(+) + n H(+)(out). The catalysed reaction is a plastoquinone + NADPH + (n+1) H(+)(in) = a plastoquinol + NADP(+) + n H(+)(out). NDH-1 shuttles electrons from an unknown electron donor, via FMN and iron-sulfur (Fe-S) centers, to quinones in the respiratory and/or the photosynthetic chain. The immediate electron acceptor for the enzyme in this species is believed to be plastoquinone. Couples the redox reaction to proton translocation, and thus conserves the redox energy in a proton gradient. Cyanobacterial NDH-1 also plays a role in inorganic carbon-concentration. The polypeptide is NAD(P)H-quinone oxidoreductase subunit L (Trichormus variabilis (strain ATCC 29413 / PCC 7937) (Anabaena variabilis)).